A 426-amino-acid polypeptide reads, in one-letter code: Histidine--tRNA ligase (426 aa).

Belongs to the class-II aminoacyl-tRNA synthetase family. Homodimer.

Its subcellular location is the cytoplasm. The enzyme catalyses tRNA(His) + L-histidine + ATP = L-histidyl-tRNA(His) + AMP + diphosphate + H(+). This chain is Histidine--tRNA ligase, found in Legionella pneumophila (strain Lens).